A 106-amino-acid polypeptide reads, in one-letter code: MYALLEIRGKQYKVKENSTILVPGWEEIKPEEVKVLMVKDEANTVVGTPFVEGAEIELEPVKQIRTKKIKVRRFKAKVNYHRKKSHRIRYTILRINGIKTSVLTEG.

The protein belongs to the bacterial ribosomal protein bL21 family. Part of the 50S ribosomal subunit. Contacts protein L20.

This protein binds to 23S rRNA in the presence of protein L20. This chain is Large ribosomal subunit protein bL21, found in Coprothermobacter proteolyticus (strain ATCC 35245 / DSM 5265 / OCM 4 / BT).